Here is a 266-residue protein sequence, read N- to C-terminus: Undecaprenyl-diphosphatase (266 aa).

Transmembrane regions (helical) follow at residues 41–61 (YAYS…LIYF), 82–102 (LVYI…LYYV), 106–126 (WLVV…AVVL), 159–179 (AVSV…LLLL), 191–211 (FVLV…SEGG), 213–233 (VATA…IITI), and 246–266 (VLVN…RIIF).

It belongs to the UppP family.

It is found in the cell membrane. The enzyme catalyses di-trans,octa-cis-undecaprenyl diphosphate + H2O = di-trans,octa-cis-undecaprenyl phosphate + phosphate + H(+). Its function is as follows. Catalyzes the dephosphorylation of undecaprenyl diphosphate (UPP). This chain is Undecaprenyl-diphosphatase, found in Pyrobaculum aerophilum (strain ATCC 51768 / DSM 7523 / JCM 9630 / CIP 104966 / NBRC 100827 / IM2).